The following is a 312-amino-acid chain: MEVDSNSSSGSFILMGVSDHPHLEIIFFAVILASYLLTLVGNLTIILLSRLDARLHTPMYFFLSNLSSLDLAFTTSSVPQMLKNLWGPDKTISYGGCVTQLYVFLWLGATECILLVVMAFDRYVAVCRPLHYMTVMNPRLCWGLAAISWLGGLGNSVIQSTFTLQLPFCGHRKVDNFLCEVPAMIKLACGDTSLNEAVLNGVCTFFTVVPVSVILVSYCFIAQAVMKIRSVEGRRKAFNTCVSHLVVVFLFYGSAIYGYLLPAKSSNQSQGKFISLFYSVVTPMVNPLIYTLRNKEVKGALGRLLGKGRGAS.

Over 1–24 the chain is Extracellular; the sequence is MEVDSNSSSGSFILMGVSDHPHLE. Asparagine 6 carries N-linked (GlcNAc...) asparagine glycosylation. Residues 25–48 form a helical membrane-spanning segment; it reads IIFFAVILASYLLTLVGNLTIILL. At 49–57 the chain is on the cytoplasmic side; sequence SRLDARLHT. Residues 58 to 79 traverse the membrane as a helical segment; it reads PMYFFLSNLSSLDLAFTTSSVP. Residues 80 to 100 are Extracellular-facing; the sequence is QMLKNLWGPDKTISYGGCVTQ. A disulfide bridge links cysteine 97 with cysteine 189. A helical membrane pass occupies residues 101 to 120; it reads LYVFLWLGATECILLVVMAF. Residues 121–139 are Cytoplasmic-facing; sequence DRYVAVCRPLHYMTVMNPR. The helical transmembrane segment at 140–160 threads the bilayer; the sequence is LCWGLAAISWLGGLGNSVIQS. Over 161–200 the chain is Extracellular; that stretch reads TFTLQLPFCGHRKVDNFLCEVPAMIKLACGDTSLNEAVLN. Residues 201 to 222 traverse the membrane as a helical segment; it reads GVCTFFTVVPVSVILVSYCFIA. The Cytoplasmic segment spans residues 223–236; that stretch reads QAVMKIRSVEGRRK. Residues 237–261 form a helical membrane-spanning segment; sequence AFNTCVSHLVVVFLFYGSAIYGYLL. At 262–272 the chain is on the extracellular side; sequence PAKSSNQSQGK. A helical transmembrane segment spans residues 273–292; that stretch reads FISLFYSVVTPMVNPLIYTL. At 293-312 the chain is on the cytoplasmic side; it reads RNKEVKGALGRLLGKGRGAS.

Belongs to the G-protein coupled receptor 1 family. As to expression, olfactory epithelium. Present in various subcellular compartments of the olfactory sensory neurons, particularly in the axonal processes and neve terminals.

The protein resides in the cell membrane. In terms of biological role, olfactory receptor that is activated by the binding of organosulfur odorants with thioether groups such as (methylthio)methanetiol (MTMT). Also binds odorants acetophenone and benzaldehyde. The activity of this receptor is mediated by G proteins which activate adenylyl cyclase. May be involved in the molecular processes underlying fasciculation and targeting of olfactory axons. This Mus musculus (Mouse) protein is Olfactory receptor 2C1.